Here is a 345-residue protein sequence, read N- to C-terminus: Probable dual-specificity RNA methyltransferase RlmN (345 aa).

The Proton acceptor role is filled by Glu-90. The Radical SAM core domain occupies 96-327 (QSYGNSVCVT…CIVRREFGHD (232 aa)). An intrachain disulfide couples Cys-103 to Cys-332. [4Fe-4S] cluster-binding residues include Cys-110, Cys-114, and Cys-117. Residues 160–161 (GE), Ser-192, 215–217 (SLH), and Asn-291 contribute to the S-adenosyl-L-methionine site. Catalysis depends on Cys-332, which acts as the S-methylcysteine intermediate.

This sequence belongs to the radical SAM superfamily. RlmN family. The cofactor is [4Fe-4S] cluster.

It is found in the cytoplasm. The enzyme catalyses adenosine(2503) in 23S rRNA + 2 reduced [2Fe-2S]-[ferredoxin] + 2 S-adenosyl-L-methionine = 2-methyladenosine(2503) in 23S rRNA + 5'-deoxyadenosine + L-methionine + 2 oxidized [2Fe-2S]-[ferredoxin] + S-adenosyl-L-homocysteine. It catalyses the reaction adenosine(37) in tRNA + 2 reduced [2Fe-2S]-[ferredoxin] + 2 S-adenosyl-L-methionine = 2-methyladenosine(37) in tRNA + 5'-deoxyadenosine + L-methionine + 2 oxidized [2Fe-2S]-[ferredoxin] + S-adenosyl-L-homocysteine. Specifically methylates position 2 of adenine 2503 in 23S rRNA and position 2 of adenine 37 in tRNAs. The polypeptide is Probable dual-specificity RNA methyltransferase RlmN (Spiroplasma citri).